Consider the following 243-residue polypeptide: Pyridoxine 5'-phosphate synthase (243 aa).

Residue N9 participates in 3-amino-2-oxopropyl phosphate binding. Position 11–12 (11–12 (DH)) interacts with 1-deoxy-D-xylulose 5-phosphate. R20 is a 3-amino-2-oxopropyl phosphate binding site. Residue H45 is the Proton acceptor of the active site. Positions 47 and 52 each coordinate 1-deoxy-D-xylulose 5-phosphate. E72 functions as the Proton acceptor in the catalytic mechanism. T102 is a 1-deoxy-D-xylulose 5-phosphate binding site. The Proton donor role is filled by H193. Residues G194 and 215–216 (GH) each bind 3-amino-2-oxopropyl phosphate.

It belongs to the PNP synthase family. Homooctamer; tetramer of dimers.

The protein localises to the cytoplasm. The enzyme catalyses 3-amino-2-oxopropyl phosphate + 1-deoxy-D-xylulose 5-phosphate = pyridoxine 5'-phosphate + phosphate + 2 H2O + H(+). The protein operates within cofactor biosynthesis; pyridoxine 5'-phosphate biosynthesis; pyridoxine 5'-phosphate from D-erythrose 4-phosphate: step 5/5. Catalyzes the complicated ring closure reaction between the two acyclic compounds 1-deoxy-D-xylulose-5-phosphate (DXP) and 3-amino-2-oxopropyl phosphate (1-amino-acetone-3-phosphate or AAP) to form pyridoxine 5'-phosphate (PNP) and inorganic phosphate. The chain is Pyridoxine 5'-phosphate synthase from Pectobacterium atrosepticum (strain SCRI 1043 / ATCC BAA-672) (Erwinia carotovora subsp. atroseptica).